The primary structure comprises 310 residues: NADH-cytochrome b5 reductase 1 (310 aa).

A helical membrane pass occupies residues tryptophan 30 to glycine 50. Positions asparagine 61–threonine 166 constitute an FAD-binding FR-type domain. Residues threonine 146–lysine 160 and histidine 172–leucine 209 each bind FAD.

This sequence belongs to the flavoprotein pyridine nucleotide cytochrome reductase family. Monomer. Component of the 2-(3-amino-3-carboxypropyl)histidine synthase complex composed of dph1, dph2, dph3 and a NADH-dependent reductase, predominantly cbr1. The cofactor is FAD.

It is found in the mitochondrion outer membrane. It catalyses the reaction 2 Fe(III)-[cytochrome b5] + NADH = 2 Fe(II)-[cytochrome b5] + NAD(+) + H(+). It carries out the reaction 2 Fe(3+)-[Dph3] + NADH = 2 Fe(2+)-[Dph3] + NAD(+) + H(+). The protein operates within protein modification; peptidyl-diphthamide biosynthesis. Its function is as follows. NADH-dependent reductase for dph3 and cytochrome b5. Required for the first step of diphthamide biosynthesis, a post-translational modification of histidine which occurs in elongation factor 2. Dph1 and dph2 transfer a 3-amino-3-carboxypropyl (ACP) group from S-adenosyl-L-methionine (SAM) to a histidine residue, the reaction is assisted by a reduction system comprising dph3 and a NADH-dependent reductase, predominantly cbr1. By reducing dph3, also involved in the formation of the tRNA wobble base modification mcm5s 2U (5-methoxycarbonylmethyl-2-thiouridine), mediated by the elongator complex. The cytochrome b5/NADH cytochrome b5 reductase electron transfer system supports the catalytic activity of several sterol biosynthetic enzymes. The polypeptide is NADH-cytochrome b5 reductase 1 (cbr1) (Emericella nidulans (strain FGSC A4 / ATCC 38163 / CBS 112.46 / NRRL 194 / M139) (Aspergillus nidulans)).